The sequence spans 132 residues: Small ribosomal subunit protein uS8 (132 aa).

The protein belongs to the universal ribosomal protein uS8 family. In terms of assembly, part of the 30S ribosomal subunit. Contacts proteins S5 and S12.

One of the primary rRNA binding proteins, it binds directly to 16S rRNA central domain where it helps coordinate assembly of the platform of the 30S subunit. The chain is Small ribosomal subunit protein uS8 from Saccharopolyspora erythraea (strain ATCC 11635 / DSM 40517 / JCM 4748 / NBRC 13426 / NCIMB 8594 / NRRL 2338).